The sequence spans 300 residues: ATP-dependent (S)-NAD(P)H-hydrate dehydratase (300 aa).

The YjeF C-terminal domain maps to 14-293 (LLALFKTVVP…NQIPSVFQTE (280 aa)). (6S)-NADPHX is bound by residues Gly114 and 167–173 (NVMEFQR). ATP contacts are provided by residues 198–202 (KGAND) and 219–228 (GSGRRCGGQG). Residue Asp229 coordinates (6S)-NADPHX.

Belongs to the NnrD/CARKD family. Mg(2+) is required as a cofactor.

The enzyme catalyses (6S)-NADHX + ATP = ADP + phosphate + NADH + H(+). The catalysed reaction is (6S)-NADPHX + ATP = ADP + phosphate + NADPH + H(+). Catalyzes the dehydration of the S-form of NAD(P)HX at the expense of ATP, which is converted to ADP. Together with NAD(P)HX epimerase, which catalyzes the epimerization of the S- and R-forms, the enzyme allows the repair of both epimers of NAD(P)HX, a damaged form of NAD(P)H that is a result of enzymatic or heat-dependent hydration. This Drosophila melanogaster (Fruit fly) protein is ATP-dependent (S)-NAD(P)H-hydrate dehydratase.